The chain runs to 273 residues: 2,3,4,5-tetrahydropyridine-2,6-dicarboxylate N-succinyltransferase (273 aa).

Substrate-binding residues include Arg-104 and Asp-141.

This sequence belongs to the transferase hexapeptide repeat family. In terms of assembly, homotrimer.

Its subcellular location is the cytoplasm. It carries out the reaction (S)-2,3,4,5-tetrahydrodipicolinate + succinyl-CoA + H2O = (S)-2-succinylamino-6-oxoheptanedioate + CoA. Its pathway is amino-acid biosynthesis; L-lysine biosynthesis via DAP pathway; LL-2,6-diaminopimelate from (S)-tetrahydrodipicolinate (succinylase route): step 1/3. This chain is 2,3,4,5-tetrahydropyridine-2,6-dicarboxylate N-succinyltransferase, found in Buchnera aphidicola subsp. Schizaphis graminum (strain Sg).